Reading from the N-terminus, the 217-residue chain is UPF0502 protein KPK_3478 (217 aa).

This sequence belongs to the UPF0502 family.

The sequence is that of UPF0502 protein KPK_3478 from Klebsiella pneumoniae (strain 342).